A 312-amino-acid polypeptide reads, in one-letter code: MAAAQHRPVMLEEAVRALAPSGGDVVVDATFGGGGHSARVLRELGPGGRVVGIDRDPEARGRAERLLGDPRFSFEQGPYDEVLWRMVGRGERADALLFDLGLSSFQVDDPRRGFSYTREGPLDMRMDPGSGPSAADFLNAAGEAEIAGVLSEYGDVPRAQARRVAREILRRRPLRTTADLREAVRAAVGWAPRGGNPAKRVFQAVRIRVNDELGGLRRALEAAERLLVPGGRLVVISFHSGEDRLVKRFIAEREGRCTCPPELPVCVCGARPVFRRGPVLRPSEREVAENPRSAPARMRVAFRTAEPAREAS.

S-adenosyl-L-methionine-binding positions include 34–36, Asp54, Leu83, Asp99, and Gln106; that span reads GGH.

Belongs to the methyltransferase superfamily. RsmH family.

The protein localises to the cytoplasm. The enzyme catalyses cytidine(1402) in 16S rRNA + S-adenosyl-L-methionine = N(4)-methylcytidine(1402) in 16S rRNA + S-adenosyl-L-homocysteine + H(+). Functionally, specifically methylates the N4 position of cytidine in position 1402 (C1402) of 16S rRNA. The protein is Ribosomal RNA small subunit methyltransferase H of Rubrobacter xylanophilus (strain DSM 9941 / JCM 11954 / NBRC 16129 / PRD-1).